The chain runs to 358 residues: Ganglioside-induced differentiation-associated protein 1 (358 aa).

The 82-residue stretch at valine 24–arginine 105 folds into the GST N-terminal domain. Residues lysine 50, lysine 172, lysine 173, lysine 188, and lysine 190 each participate in a glycyl lysine isopeptide (Lys-Gly) (interchain with G-Cter in ubiquitin) cross-link. The GST C-terminal domain occupies proline 153–phenylalanine 309. Lysine 203 carries the post-translational modification N6-acetyllysine; alternate. Lysine 203 is covalently cross-linked (Glycyl lysine isopeptide (Lys-Gly) (interchain with G-Cter in ubiquitin); alternate). Glycyl lysine isopeptide (Lys-Gly) (interchain with G-Cter in ubiquitin) cross-links involve residues lysine 206, lysine 207, and lysine 214. 2 consecutive transmembrane segments (helical) span residues valine 292–alanine 312 and leucine 320–phenylalanine 340. Positions leucine 320–phenylalanine 358 are required for mitochondrial localization.

Belongs to the GST superfamily. As to quaternary structure, homodimer. In terms of processing, ubiquitinated by PRKN during mitophagy, leading to its degradation and enhancement of mitophagy. Deubiquitinated by USP30. Highly expressed in whole brain and spinal cord. Predominant expression in central tissues of the nervous system not only in neurons but also in Schwann cells.

It is found in the mitochondrion outer membrane. Its subcellular location is the cytoplasm. Regulates the mitochondrial network by promoting mitochondrial fission. The polypeptide is Ganglioside-induced differentiation-associated protein 1 (GDAP1) (Homo sapiens (Human)).